The following is a 291-amino-acid chain: Formamidopyrimidine-DNA glycosylase (291 aa).

The active-site Schiff-base intermediate with DNA is Pro-2. Catalysis depends on Glu-3, which acts as the Proton donor. Lys-60 (proton donor; for beta-elimination activity) is an active-site residue. The DNA site is built by His-97, Arg-116, and Arg-161. The FPG-type zinc finger occupies 246–280 (WVYNRAGEPCRVCGMPIQRIRLAGRSSHFCSECQT). The active-site Proton donor; for delta-elimination activity is Arg-270.

Belongs to the FPG family. As to quaternary structure, monomer. Requires Zn(2+) as cofactor.

It catalyses the reaction Hydrolysis of DNA containing ring-opened 7-methylguanine residues, releasing 2,6-diamino-4-hydroxy-5-(N-methyl)formamidopyrimidine.. The enzyme catalyses 2'-deoxyribonucleotide-(2'-deoxyribose 5'-phosphate)-2'-deoxyribonucleotide-DNA = a 3'-end 2'-deoxyribonucleotide-(2,3-dehydro-2,3-deoxyribose 5'-phosphate)-DNA + a 5'-end 5'-phospho-2'-deoxyribonucleoside-DNA + H(+). Involved in base excision repair of DNA damaged by oxidation or by mutagenic agents. Acts as a DNA glycosylase that recognizes and removes damaged bases. Has a preference for oxidized purines, such as 7,8-dihydro-8-oxoguanine (8-oxoG). Has AP (apurinic/apyrimidinic) lyase activity and introduces nicks in the DNA strand. Cleaves the DNA backbone by beta-delta elimination to generate a single-strand break at the site of the removed base with both 3'- and 5'-phosphates. This is Formamidopyrimidine-DNA glycosylase from Nostoc punctiforme (strain ATCC 29133 / PCC 73102).